We begin with the raw amino-acid sequence, 228 residues long: Serum amyloid P-component (228 aa).

A signal peptide spans 1–20; that stretch reads MDKLLLWMSVFTSLLSEAFA. A Pentraxin (PTX) domain is found at 25–224; the sequence is NQKVFVFPRE…YVVIKPRMWD (200 aa). Residue Asn-52 is glycosylated (N-linked (GlcNAc...) asparagine). A disulfide bond links Cys-56 and Cys-115. Residues Asp-78, Asn-79, Glu-156, Gln-157, Asp-158, and Gln-168 each coordinate Ca(2+).

This sequence belongs to the pentraxin family. As to quaternary structure, homopentamer. Pentraxin (or pentaxin) have a discoid arrangement of 5 non-covalently bound subunits. Ca(2+) is required as a cofactor.

The protein localises to the secreted. This is Serum amyloid P-component (Apcs) from Rattus norvegicus (Rat).